Here is a 146-residue protein sequence, read N- to C-terminus: Small ribosomal subunit protein bS6 (146 aa).

The tract at residues 94–146 (GPITTPSPMMQEGKSRPPHSSDEDSENTAPAKAKTADSPGEDTRTTEESDPKP) is disordered. 2 stretches are compositionally biased toward basic and acidic residues: residues 106 to 115 (GKSRPPHSSD) and 134 to 146 (EDTRTTEESDPKP).

It belongs to the bacterial ribosomal protein bS6 family.

Binds together with bS18 to 16S ribosomal RNA. The sequence is that of Small ribosomal subunit protein bS6 from Nitrosomonas europaea (strain ATCC 19718 / CIP 103999 / KCTC 2705 / NBRC 14298).